The chain runs to 319 residues: Putative antiporter CaxA (319 aa).

Transmembrane regions (helical) follow at residues valine 3–valine 23, methionine 38–alanine 58, isoleucine 81–isoleucine 101, phenylalanine 105–threonine 125, alanine 127–glycine 147, valine 175–alanine 195, leucine 208–isoleucine 228, isoleucine 250–alanine 270, tyrosine 275–glycine 292, and isoleucine 297–phenylalanine 317.

This sequence belongs to the Ca(2+):cation antiporter (CaCA) (TC 2.A.19) family.

Its subcellular location is the cell membrane. In terms of biological role, confers modest Ca(2+) and Na(+) resistance. The sequence is that of Putative antiporter CaxA (caxA) from Alkalimonas amylolytica.